The primary structure comprises 332 residues: UDP-N-acetylenolpyruvoylglucosamine reductase (332 aa).

The FAD-binding PCMH-type domain maps to 15–184 (IDVSAACFLE…TYVSFRLSKR (170 aa)). Arginine 160 is a catalytic residue. The Proton donor role is filled by serine 232. Glutamate 328 is a catalytic residue.

Belongs to the MurB family. The cofactor is FAD.

It is found in the cytoplasm. It catalyses the reaction UDP-N-acetyl-alpha-D-muramate + NADP(+) = UDP-N-acetyl-3-O-(1-carboxyvinyl)-alpha-D-glucosamine + NADPH + H(+). It functions in the pathway cell wall biogenesis; peptidoglycan biosynthesis. Its function is as follows. Cell wall formation. This is UDP-N-acetylenolpyruvoylglucosamine reductase from Bacteroides fragilis (strain ATCC 25285 / DSM 2151 / CCUG 4856 / JCM 11019 / LMG 10263 / NCTC 9343 / Onslow / VPI 2553 / EN-2).